We begin with the raw amino-acid sequence, 359 residues long: uncharacterized protein (359 aa).

The 267-residue stretch at 43–309 folds into the Protein kinase domain; it reads YHLIRKLGSG…VLDFLGDDWG (267 aa). ATP-binding positions include 49 to 57 and Lys-72; that span reads LGSGSYGRV. Catalysis depends on Asp-163, which acts as the Proton acceptor. Positions 314–359 are disordered; sequence REGPGVLGSAVSYEDREEGGSSLEEWTDEGDDSKSGGRTGTDGGAP. Positions 350 to 359 are enriched in gly residues; that stretch reads GRTGTDGGAP.

Belongs to the protein kinase superfamily. Ser/Thr protein kinase family. STKL subfamily.

The enzyme catalyses L-seryl-[protein] + ATP = O-phospho-L-seryl-[protein] + ADP + H(+). The catalysed reaction is L-threonyl-[protein] + ATP = O-phospho-L-threonyl-[protein] + ADP + H(+). This is an uncharacterized protein from Homo sapiens (Human).